We begin with the raw amino-acid sequence, 342 residues long: Cytochrome c oxidase subunit 2 (342 aa).

The signal sequence occupies residues Met-1 to Gly-22. Cys-23 carries the N-palmitoyl cysteine lipid modification. The S-diacylglycerol cysteine moiety is linked to residue Cys-23. Topologically, residues Cys-23–Ile-50 are extracellular. The interval Cys-23–Glu-249 is cytochrome c oxidase subunit II. The helical transmembrane segment at Ile-51–Ala-69 threads the bilayer. The Cytoplasmic segment spans residues Lys-70 to Ala-89. The helical transmembrane segment at Leu-90–Pro-108 threads the bilayer. Over Thr-109–Glu-342 the chain is Extracellular. The Cu cation site is built by His-175, Cys-210, Cys-214, and His-218. A Cytochrome c domain is found at Thr-250–Glu-342. Positions 264, 267, 268, and 317 each coordinate heme c.

Belongs to the cytochrome c oxidase subunit 2 family. Cu cation serves as cofactor. The cofactor is heme c.

Its subcellular location is the cell membrane. It catalyses the reaction 4 Fe(II)-[cytochrome c] + O2 + 8 H(+)(in) = 4 Fe(III)-[cytochrome c] + 2 H2O + 4 H(+)(out). Subunits I and II form the functional core of the enzyme complex. Electrons originating in cytochrome c are transferred via heme a and Cu(A) to the binuclear center formed by heme a3 and Cu(B). The sequence is that of Cytochrome c oxidase subunit 2 (ctaC) from Alkalihalophilus pseudofirmus (strain ATCC BAA-2126 / JCM 17055 / OF4) (Bacillus pseudofirmus).